Consider the following 180-residue polypeptide: Probable chorismate pyruvate-lyase (180 aa).

Substrate is bound by residues R73, L111, and E170.

It belongs to the UbiC family.

Its subcellular location is the cytoplasm. It carries out the reaction chorismate = 4-hydroxybenzoate + pyruvate. It participates in cofactor biosynthesis; ubiquinone biosynthesis. Functionally, removes the pyruvyl group from chorismate, with concomitant aromatization of the ring, to provide 4-hydroxybenzoate (4HB) for the ubiquinone pathway. The polypeptide is Probable chorismate pyruvate-lyase (Nitrosospira multiformis (strain ATCC 25196 / NCIMB 11849 / C 71)).